The primary structure comprises 123 residues: Phospholipase A2 (123 aa).

7 disulfide bridges follow: Cys-11–Cys-77, Cys-27–Cys-123, Cys-29–Cys-45, Cys-44–Cys-105, Cys-51–Cys-98, Cys-61–Cys-91, and Cys-84–Cys-96. Residues Tyr-28, Gly-30, and Gly-32 each coordinate Ca(2+). The active site involves His-48. Asp-49 is a binding site for Ca(2+). The active site involves Asp-99.

Belongs to the phospholipase A2 family. As to quaternary structure, monomer or homodimer. It depends on Ca(2+) as a cofactor. Post-translationally, activated by trypsin cleavage in the duodenum. Can also be activated by thrombin or autocatalytically.

It localises to the secreted. It catalyses the reaction a 1,2-diacyl-sn-glycero-3-phosphocholine + H2O = a 1-acyl-sn-glycero-3-phosphocholine + a fatty acid + H(+). The enzyme catalyses 1,2-ditetradecanoyl-sn-glycero-3-phosphocholine + H2O = 1-tetradecanoyl-sn-glycero-3-phosphocholine + tetradecanoate + H(+). It carries out the reaction 1,2-dihexadecanoyl-sn-glycero-3-phosphocholine + H2O = 1-hexadecanoyl-sn-glycero-3-phosphocholine + hexadecanoate + H(+). The catalysed reaction is 1-hexadecanoyl-2-(9Z-octadecenoyl)-sn-glycero-3-phosphocholine + H2O = 1-hexadecanoyl-sn-glycero-3-phosphocholine + (9Z)-octadecenoate + H(+). It catalyses the reaction 1-hexadecanoyl-2-(5Z,8Z,11Z,14Z-eicosatetraenoyl)-sn-glycero-3-phosphocholine + H2O = 1-hexadecanoyl-sn-glycero-3-phosphocholine + (5Z,8Z,11Z,14Z)-eicosatetraenoate + H(+). The enzyme catalyses 1-hexadecanoyl-2-(9Z-octadecenoyl)-sn-glycero-3-phospho-(1'-sn-glycerol) + H2O = 1-hexadecanoyl-sn-glycero-3-phospho-(1'-sn-glycerol) + (9Z)-octadecenoate + H(+). It carries out the reaction N-hexadecanoyl-1,2-di-(9Z-octadecenoyl)-sn-glycero-3-phosphoethanolamine + H2O = N-hexadecanoyl-1-(9Z-octadecenoyl)-sn-glycero-3-phosphoethanolamine + (9Z)-octadecenoate + H(+). The catalysed reaction is 1-hexadecanoyl-2-(9Z,12Z-octadecadienoyl)-sn-glycero-3-phosphoethanolamine + H2O = 1-hexadecanoyl-sn-glycero-3-phosphoethanolamine + (9Z,12Z)-octadecadienoate + H(+). It catalyses the reaction N,1-dihexadecanoyl-2-(9Z,12Z-octadecadienoyl)-sn-glycero-3-phosphoethanolamine + H2O = N,1-dihexadecanoyl-sn-glycero-3-phosphoethanolamine + (9Z,12Z)-octadecadienoate + H(+). Its function is as follows. Secretory calcium-dependent phospholipase A2 that primarily targets dietary phospholipids in the intestinal tract. Hydrolyzes the ester bond of the fatty acyl group attached at sn-2 position of phospholipids (phospholipase A2 activity) with preference for phosphatidylethanolamines and phosphatidylglycerols over phosphatidylcholines. May play a role in the biosynthesis of N-acyl ethanolamines that regulate energy metabolism and inflammation in the intestinal tract. Hydrolyzes N-acyl phosphatidylethanolamines to N-acyl lysophosphatidylethanolamines, which are further cleaved by a lysophospholipase D to release N-acyl ethanolamines. May act in an autocrine and paracrine manner. Has anti-helminth activity in a process regulated by gut microbiota. Upon helminth infection of intestinal epithelia, directly affects phosphatidylethanolamine contents in the membrane of helminth larvae, likely controlling an array of phospholipid-mediated cellular processes such as membrane fusion and cell division while providing for better immune recognition, ultimately reducing larvae integrity and infectivity. This is Phospholipase A2 (PLA2G1B) from Ovis aries (Sheep).